A 124-amino-acid polypeptide reads, in one-letter code: Transcription initiation factor IIA subunit 2 (124 aa).

This sequence belongs to the TFIIA subunit 2 family. In terms of assembly, TFIIA is a heterodimer composed of the large TOA1 and the small TOA2 subunits.

Its subcellular location is the nucleus. In terms of biological role, TFIIA is a component of the transcription machinery of RNA polymerase II and plays an important role in transcriptional activation. TFIIA in a complex with tbp mediates transcriptional activity. In Cryptococcus neoformans var. neoformans serotype D (strain JEC21 / ATCC MYA-565) (Filobasidiella neoformans), this protein is Transcription initiation factor IIA subunit 2 (TOA2).